A 72-amino-acid chain; its full sequence is uncharacterized protein (72 aa).

This is an uncharacterized protein from Vaccinia virus (strain Western Reserve) (VACV).